We begin with the raw amino-acid sequence, 155 residues long: uncharacterized protein (155 aa).

The segment at 135–155 (SQANSKNDSNSKDDLPNPFSV) is disordered.

This is an uncharacterized protein from Acidianus convivator (ATV).